The following is a 39-amino-acid chain: Potassium channel toxin alpha-KTx 2.16 (39 aa).

Disulfide bonds link Cys-7-Cys-29, Cys-13-Cys-34, and Cys-17-Cys-36. Ile-39 carries the post-translational modification Isoleucine amide.

It belongs to the short scorpion toxin superfamily. Potassium channel inhibitor family. Alpha-KTx 02 subfamily. As to expression, expressed by the venom gland.

The protein localises to the secreted. Its function is as follows. Blocks human voltage-gated potassium channels Kv1.2/KCNA2 (IC(50)=0.7 nM), Kv1.3/KCNA3 (IC(50)=26.2 nM) and blocks intermediate conductance calcium-activated potassium channel KCa3.1/KCNN4 (IC(50)=56 nM). This chain is Potassium channel toxin alpha-KTx 2.16, found in Centruroides tecomanus (Scorpion).